The following is a 362-amino-acid chain: dTDP-glucose 4,6-dehydratase (362 aa).

Residues 11–12 (FI), 32–35 (DKLT), 58–59 (DI), 80–84 (LAAES), and T99 each bind NAD(+). Residue S84 participates in substrate binding. T133 serves as a coordination point for substrate. D134 serves as the catalytic Proton donor. Active-site proton acceptor residues include E135 and Y167. Residue 167 to 171 (YSASK) participates in NAD(+) binding. A substrate-binding site is contributed by N196. N197 serves as a coordination point for NAD(+). Substrate contacts are provided by residues 206-207 (KL), 222-224 (PVY), R231, N266, and 300-304 (DRPGH).

The protein belongs to the NAD(P)-dependent epimerase/dehydratase family. dTDP-glucose dehydratase subfamily. It depends on NAD(+) as a cofactor.

The catalysed reaction is dTDP-alpha-D-glucose = dTDP-4-dehydro-6-deoxy-alpha-D-glucose + H2O. It participates in bacterial outer membrane biogenesis; LPS O-antigen biosynthesis. In terms of biological role, catalyzes the dehydration of dTDP-D-glucose to form dTDP-4-dehydro-6-deoxy-D-glucose via a three-step process involving oxidation, dehydration and reduction. This reaction is a step in the biosynthesis of D-fucofuranose, a component of E.coli O52 O antigen. This chain is dTDP-glucose 4,6-dehydratase (rmlB), found in Escherichia coli.